The chain runs to 602 residues: MFS-type efflux transporter pyiT (602 aa).

The segment at 1–33 (MEKAKDSLPTTGDPVPSQGTINPVDETGGSASD) is disordered. A run of 7 helical transmembrane segments spans residues 43-63 (FWFTFSSLVLTAFLSALEGSV), 123-143 (WLTIGAVVIFTVGSGICGGAT), 156-176 (GLGSAGINMLVELILCDLLPL), 185-205 (IIFMFVILGSVIGPFLGGILV), 212-232 (WVFYINIPFSGVCVVLLFFFL), 251-271 (FFGNFLLAASVGSCLFALTYG), and 282-302 (IIVSLVLGLLGHVAFMFFEAS). Asn317 carries an N-linked (GlcNAc...) asparagine glycan. The next 6 membrane-spanning stretches (helical) occupy residues 325–345 (IATFLQTLVSFWVLYFLPLYF), 357–377 (GVMLLPFSVVYALSSLAGGAL), 386–406 (NIHFASFALMTIGMGTLTILN), 410–430 (SLAVIVVLEMIVALAIGVPTA), 451–471 (TFAFLRSVGTIWGVSIPAAIF), and 524–544 (LERVWQIGIVFAGVGFLVIFL). Positions 564–585 (IPQTAADNSASRPNTINDTASQ) are enriched in polar residues. Positions 564 to 602 (IPQTAADNSASRPNTINDTASQAPILKQRRSTNQERETV) are disordered. N-linked (GlcNAc...) asparagine glycosylation is present at Asn580.

It belongs to the major facilitator superfamily.

It localises to the cell membrane. MFS-type efflux transporter; part of the gene cluster that mediates the biosynthesis of the mycotoxin pyrichalasin H, a tyrosine-derived cytochalasan that inhibits the growth of rice seedlings, but also inhibits lymphocyte capping and actin polymerization and alters cell morphology. Pyrichalasin H is indicated as the responsible agent for the genus-specific pathogenicity of M.grisea toward crabgrass. PyiT might be involved in the excretion of pyrichalasin H. This chain is MFS-type efflux transporter pyiT, found in Pyricularia grisea (Crabgrass-specific blast fungus).